The chain runs to 71 residues: DNA-directed RNA polymerases I, II, and III subunit RPABC5 (71 aa).

Zn(2+) contacts are provided by Cys-7, Cys-10, Cys-44, and Cys-45.

The protein belongs to the archaeal Rpo10/eukaryotic RPB10 RNA polymerase subunit family. As to quaternary structure, component of the RNA polymerase I (Pol I), RNA polymerase II (Pol II) and RNA polymerase III (Pol III) complexes consisting of at least 13, 12 and 17 subunits, respectively.

The protein localises to the nucleus. In terms of biological role, DNA-dependent RNA polymerase catalyzes the transcription of DNA into RNA using the four ribonucleoside triphosphates as substrates. Common component of RNA polymerases I, II and III which synthesize ribosomal RNA precursors, mRNA precursors and many functional non-coding RNAs, and a small RNAs, such as 5S rRNA and tRNAs, respectively. Pol II is the central component of the basal RNA polymerase II transcription machinery. Pols are composed of mobile elements that move relative to each other. In Pol II, RBP10 is part of the core element with the central large cleft. The polypeptide is DNA-directed RNA polymerases I, II, and III subunit RPABC5 (Brassica napus (Rape)).